Consider the following 248-residue polypeptide: UPF0280 protein Maeo_0343 (248 aa).

It belongs to the UPF0280 family.

The polypeptide is UPF0280 protein Maeo_0343 (Methanococcus aeolicus (strain ATCC BAA-1280 / DSM 17508 / OCM 812 / Nankai-3)).